Here is a 158-residue protein sequence, read N- to C-terminus: 2-C-methyl-D-erythritol 2,4-cyclodiphosphate synthase (158 aa).

A divalent metal cation is bound by residues aspartate 9 and histidine 11. Residues 9 to 11 (DVH) and 35 to 36 (HS) contribute to the 4-CDP-2-C-methyl-D-erythritol 2-phosphate site. Histidine 43 contributes to the a divalent metal cation binding site. 4-CDP-2-C-methyl-D-erythritol 2-phosphate-binding positions include 57 to 59 (DIG), 62 to 66 (FPDTD), 101 to 107 (AQKPKMA), 133 to 136 (TTTE), phenylalanine 140, and arginine 143.

The protein belongs to the IspF family. In terms of assembly, homotrimer. The cofactor is a divalent metal cation.

It carries out the reaction 4-CDP-2-C-methyl-D-erythritol 2-phosphate = 2-C-methyl-D-erythritol 2,4-cyclic diphosphate + CMP. It functions in the pathway isoprenoid biosynthesis; isopentenyl diphosphate biosynthesis via DXP pathway; isopentenyl diphosphate from 1-deoxy-D-xylulose 5-phosphate: step 4/6. In terms of biological role, involved in the biosynthesis of isopentenyl diphosphate (IPP) and dimethylallyl diphosphate (DMAPP), two major building blocks of isoprenoid compounds. Catalyzes the conversion of 4-diphosphocytidyl-2-C-methyl-D-erythritol 2-phosphate (CDP-ME2P) to 2-C-methyl-D-erythritol 2,4-cyclodiphosphate (ME-CPP) with a corresponding release of cytidine 5-monophosphate (CMP). The polypeptide is 2-C-methyl-D-erythritol 2,4-cyclodiphosphate synthase (Bacillus cereus (strain ATCC 10987 / NRS 248)).